We begin with the raw amino-acid sequence, 131 residues long: Histone H2A.1 (131 aa).

S2 is modified (N-acetylserine). N6-acetyllysine is present on residues K4 and K7. The residue at position 105 (Q105) is an N5-methylglutamine. K126 participates in a covalent cross-link: Glycyl lysine isopeptide (Lys-Gly) (interchain with G-Cter in SUMO). S128 is modified (phosphoserine). The short motif at 128–129 (SQ) is the [ST]-Q motif element.

This sequence belongs to the histone H2A family. The nucleosome is a histone octamer containing two molecules each of H2A, H2B, H3 and H4 assembled in one H3-H4 heterotetramer and two H2A-H2B heterodimers. The octamer wraps approximately 147 bp of DNA. Post-translationally, phosphorylated to form H2AS128ph (gamma-H2A) in response to DNA double-strand breaks (DSBs) generated by exogenous genotoxic agents and by stalled replication forks. Phosphorylation is dependent on the DNA damage checkpoint kinases MEC1/ATR and TEL1/ATM, spreads on either side of a detected DSB site and may mark the surrounding chromatin for recruitment of proteins required for DNA damage signaling and repair. Gamma-H2A is removed from the DNA prior to the strand invasion-primer extension step of the repair process and subsequently dephosphorylated by PPH3, a component of the histone H2A phosphatase complex (HTP-C). Dephosphorylation is necessary for efficient recovery from the DNA damage checkpoint. Sumoylation on Lys-126 may lead to transcriptional repression. In terms of processing, acetylated by ESA1 to form H2AK4ac and H2AK7ac.

The protein localises to the nucleus. The protein resides in the chromosome. Functionally, core component of nucleosome which plays a central role in DNA double strand break (DSB) repair. Nucleosomes wrap and compact DNA into chromatin, limiting DNA accessibility to the cellular machineries which require DNA as a template. Histones thereby play a central role in transcription regulation, DNA repair, DNA replication and chromosomal stability. DNA accessibility is regulated via a complex set of post-translational modifications of histones, also called histone code, and nucleosome remodeling. The protein is Histone H2A.1 (HTA1) of Eremothecium gossypii (strain ATCC 10895 / CBS 109.51 / FGSC 9923 / NRRL Y-1056) (Yeast).